A 181-amino-acid chain; its full sequence is Alkyl hydroperoxide reductase AhpD (181 aa).

Cys-131 (proton donor) is an active-site residue. Cys-131 and Cys-134 are oxidised to a cystine. Catalysis depends on Cys-134, which acts as the Cysteine sulfenic acid (-SOH) intermediate.

This sequence belongs to the AhpD family.

The enzyme catalyses N(6)-[(R)-dihydrolipoyl]-L-lysyl-[lipoyl-carrier protein] + a hydroperoxide = N(6)-[(R)-lipoyl]-L-lysyl-[lipoyl-carrier protein] + an alcohol + H2O. Functionally, antioxidant protein with alkyl hydroperoxidase activity. Required for the reduction of the AhpC active site cysteine residues and for the regeneration of the AhpC enzyme activity. This Bradyrhizobium sp. (strain ORS 278) protein is Alkyl hydroperoxide reductase AhpD.